Reading from the N-terminus, the 210-residue chain is uncharacterized protein (210 aa).

A run of 4 helical transmembrane segments spans residues 5–25, 50–70, 75–95, and 155–175; these read LAYI…TMLV, FWTV…VILF, YLGA…KSMF, and IILA…LVYI.

This sequence belongs to the Rht family.

It is found in the cell membrane. This is an uncharacterized protein from Bacillus subtilis (strain 168).